A 262-amino-acid polypeptide reads, in one-letter code: WW domain-binding protein 2 (262 aa).

In terms of domain architecture, GRAM spans methionine 1–glutamine 84. Residue tyrosine 192 is modified to Phosphotyrosine. The PPxY motif 1 motif lies at proline 196–tyrosine 200. A compositionally biased stretch (pro residues) spans proline 197–proline 206. The interval proline 197–glutamine 262 is disordered. A compositionally biased stretch (low complexity) spans alanine 219–alanine 231. At tyrosine 232 the chain carries Phosphotyrosine. The span at serine 246–proline 255 shows a compositional bias: pro residues. A PPxY motif 2 motif is present at residues proline 249–tyrosine 253.

Binds to the WW domain of YAP1, WWP1 and WWP2. Interacts with NEDD4. Interacts with ESR1 and UBE3A. Phosphorylated in repsonse to EGF as well as estrogen and progesterone hormones. Tyr-192 and Tyr-232 are phosphorylated by YES and SRC inducing nuclear translocation.

The protein resides in the cytoplasm. Its subcellular location is the nucleus. Its function is as follows. Acts as a transcriptional coactivator of estrogen and progesterone receptors (ESR1 and PGR) upon hormone activation. In presence of estrogen, binds to ESR1-responsive promoters. Synergizes with YAP1 to enhance PGR activity. Modulates expression of post-synaptic scaffolding proteins via regulation of ESR1, ESR2 and PGR. The chain is WW domain-binding protein 2 (Wbp2) from Rattus norvegicus (Rat).